A 132-amino-acid chain; its full sequence is Glycine cleavage system H protein (132 aa).

The Lipoyl-binding domain occupies 27–109 (FATIGISAFA…FDFGWILKVK (83 aa)). The residue at position 68 (Lys68) is an N6-lipoyllysine.

This sequence belongs to the GcvH family. As to quaternary structure, the glycine cleavage system is composed of four proteins: P, T, L and H. The cofactor is (R)-lipoate.

Functionally, the glycine cleavage system catalyzes the degradation of glycine. The H protein shuttles the methylamine group of glycine from the P protein to the T protein. This is Glycine cleavage system H protein from Rhodopirellula baltica (strain DSM 10527 / NCIMB 13988 / SH1).